The sequence spans 659 residues: mRNA export factor ICP27 homolog (659 aa).

Cysteine 130, histidine 266, cysteine 268, and cysteine 273 together coordinate Zn(2+). A CHC2-type zinc finger spans residues 130 to 273 (CMMSNGERPP…CEHACNDNAC (144 aa)). Residues 317-659 (GSFDDSRSAT…GEDGESDMTL (343 aa)) are disordered. Over residues 324–336 (SATSGDGSSCSSA) the composition is skewed to low complexity. A compositionally biased stretch (polar residues) spans 354–365 (SDQTDTSNNGTV). The segment covering 387-397 (SPLDRPNDYHY) has biased composition (basic and acidic residues). Positions 413–427 (GSGSSSTEAVSTASA) are enriched in low complexity. The span at 483–499 (SPERRSSEERSSSDQRR) shows a compositional bias: basic and acidic residues. Positions 503–513 (LSRSASATSGG) are enriched in polar residues. The segment covering 553–575 (SRSNTPPSSPSKPDSAPAASASP) has biased composition (low complexity). Over residues 598 to 610 (ESVRVSERFETGD) the composition is skewed to basic and acidic residues. Acidic residues-rich tracts occupy residues 617–628 (ETEDESDDEDDQ) and 646–659 (SETD…DMTL).

This sequence belongs to the HHV-1 ICP27 protein family.

It localises to the virion tegument. It is found in the virion. The protein localises to the host nucleus. Its subcellular location is the host cytoplasm. Immediate early (EI) protein that plays many roles during productive infection including regulation of viral gene expression and nuclear export of intronless viral RNAs. This Elephantid herpesvirus 1 (isolate Asian elephant/Berlin/Kiba/1998) (EIHV-1) protein is mRNA export factor ICP27 homolog.